We begin with the raw amino-acid sequence, 787 residues long: Probable basic-leucine zipper transcription factor J (787 aa).

Over residues 18-90 (NSNIHNNTHN…NNTQNTNNGT (73 aa)) the composition is skewed to low complexity. Disordered stretches follow at residues 18-95 (NSNI…LTPL), 153-173 (LNLS…NNNP), 186-306 (LQSQ…NNNT), 343-372 (DSLL…IQTS), 401-441 (LSSA…NNSN), and 473-507 (ASSE…DEDQ). Composition is skewed to low complexity over residues 186–223 (LQSQ…SSPI), 235–258 (SSPI…STSP), 273–305 (NNNN…LNNN), and 351–366 (NNNN…NNNN). Residues 473 to 483 (ASSESAQSESS) show a composition bias toward low complexity. The bZIP domain occupies 549–612 (ELKKQRRLVK…KALKKQLYSL (64 aa)). Positions 551 to 603 (KKQRRLVKNREYASQSRSRRKIYVENIETKLQKTNQDCASIKSQLNSVKEENK) are basic motif. The segment at 605 to 612 (LKKQLYSL) is leucine-zipper. Disordered regions lie at residues 723-747 (SNYI…VVST) and 763-787 (DKEV…SPLN). Residues 763-778 (DKEVPQKCKDSSDLKC) show a composition bias toward basic and acidic residues.

Belongs to the bZIP family.

The protein localises to the nucleus. Probable transcriptional regulator. The chain is Probable basic-leucine zipper transcription factor J (bzpJ) from Dictyostelium discoideum (Social amoeba).